We begin with the raw amino-acid sequence, 185 residues long: MVNPIIKEAKEKMKKTLERIEDELRKMRTGKPSPAILEEIKVDYYGVPTPVNQLATISVSEERTLVIKPWDKSVLSLIEKAINASDLGLNPINDGNVIRLVFPSPTTEQREKWVKKAKEIVEEGKIAIRNIRRDILKKIKEDQKEGKIPEDDAKRLENEIQKLTDEFIENLDKVFEIKKEEIMEF.

The protein belongs to the RRF family.

The protein localises to the cytoplasm. Functionally, responsible for the release of ribosomes from messenger RNA at the termination of protein biosynthesis. May increase the efficiency of translation by recycling ribosomes from one round of translation to another. In Thermotoga petrophila (strain ATCC BAA-488 / DSM 13995 / JCM 10881 / RKU-1), this protein is Ribosome-recycling factor.